Reading from the N-terminus, the 81-residue chain is MNRLTFYGLCLSGAVGMGLLVGSPICRPVFGELLGANRDQEKREKEIKILMAGGTIDPHHNHHDDHHDSHGHGHGKIKGHH.

An N-terminal signal peptide occupies residues 1 to 16 (MNRLTFYGLCLSGAVG). Residues 55-81 (TIDPHHNHHDDHHDSHGHGHGKIKGHH) form a disordered region. A compositionally biased stretch (basic and acidic residues) spans 57–71 (DPHHNHHDDHHDSHG). A compositionally biased stretch (basic residues) spans 72–81 (HGHGKIKGHH).

It is found in the secreted. This is an uncharacterized protein from Dictyostelium discoideum (Social amoeba).